Here is a 594-residue protein sequence, read N- to C-terminus: MYSPKRVKLNVTSGMRKRPETGENNDDLYPPTALARNGISPYFIGKPRRKIVVETPSDSAQQQPPFKSRSQQNGLDDELDGIIIDEDEDRTVDVSFSQKQDTRKLKSRPFLGEKSSFKLGEIPKPKEEKRREEPFTMRGFDFGSDDKVTKIRDKICDIVDPTNARRTDPNFIRQMHENTLKGIEVASNPHFKKTRAPTKNRAAIQNTLGTLYPSFTTAAGQDPQNSKFQVPLDRQSSSQSIGSLAGIPPARRAPDIPKRCSNPLIRKAMGMDTEGGGKDEKMSGLRAEPTLKHFDENIISLIESEIMSVNNEIGWADVAGLEGAKKALREIVVLPFKRPDVFTGIRAPPKGVLLFGPPGTGKTMIGRCVASQCKATFFNISASSLTSKWVGEGEKLVRALFSVARLKLPSVIFIDEIDSLLSSRSESEHESSRRIKTEFLVQLDGVNTAPDERLLVLGATNRPQELDEAARRRFQKRLYIALPEPESRTQIVQNLLVGTRHDITNHNLERIRELTDGYSGADMRQLCTEAAMGPIRDIGDDIETIDKDDIRAVTVMDFAEAARVVRPTVDDSQLDAYAAWDKKFGCLPPPSISR.

Disordered stretches follow at residues 1-79 (MYSP…DDEL) and 239-261 (QSIG…KRCS). Residues 56–73 (PSDSAQQQPPFKSRSQQN) are compositionally biased toward polar residues. ATP-binding positions include Ala319 and 359–364 (GTGKTM).

This sequence belongs to the AAA ATPase family. In terms of assembly, hexamer. It depends on Mg(2+) as a cofactor. As to expression, expressed in germ cells.

The protein localises to the nucleus. It carries out the reaction ATP + H2O = ADP + phosphate + H(+). Its function is as follows. Has a role in spindle assembly which acts in the progression through mitosis during embryogenesis. Required for fertility. The protein is Fidgetin-like protein 1 (figl-1) of Caenorhabditis elegans.